A 215-amino-acid chain; its full sequence is N-(5'-phosphoribosyl)anthranilate isomerase (215 aa).

Belongs to the TrpF family.

It catalyses the reaction N-(5-phospho-beta-D-ribosyl)anthranilate = 1-(2-carboxyphenylamino)-1-deoxy-D-ribulose 5-phosphate. It functions in the pathway amino-acid biosynthesis; L-tryptophan biosynthesis; L-tryptophan from chorismate: step 3/5. This is N-(5'-phosphoribosyl)anthranilate isomerase from Ruegeria sp. (strain TM1040) (Silicibacter sp.).